Here is a 263-residue protein sequence, read N- to C-terminus: MRRISLTSSPVRLLLFLLLLLIALEIMVGGHSLCFNFTIKSLSRPGQPWCEAQVFLNKNLFLQYNSDNNMVKPLGLLGKKVYATSTWGELTQTLGEVGRDLRMLLCDIKPQIKTSDPSTLQVEMFCQREAERCTGASWQFATNGEKSLLFDAMNMTWTVINHEASKIKETWKKDRGLEKYFRKLSKGDCDHWLREFLGHWEAMPEPTVSPVNASDIHWSSSSLPDRWIILGAFILLVLMGIVLICVWWQNGEWQAGLWPLRTS.

The first 30 residues, 1–30 (MRRISLTSSPVRLLLFLLLLLIALEIMVGG), serve as a signal peptide directing secretion. Positions 31-116 (HSLCFNFTIK…DIKPQIKTSD (86 aa)) are MHC class I alpha-1 like; down-regulates the cell surface expression of KLRK1. Residues 31–225 (HSLCFNFTIK…IHWSSSSLPD (195 aa)) lie on the Extracellular side of the membrane. Residues asparagine 36, asparagine 154, and asparagine 212 are each glycosylated (N-linked (GlcNAc...) asparagine). Positions 117–207 (PSTLQVEMFC…GHWEAMPEPT (91 aa)) are MHC class I alpha-2 like; down-regulates the cell surface expression of KLRK1. Cysteine 126 and cysteine 189 are joined by a disulfide. Residues 226–248 (RWIILGAFILLVLMGIVLICVWW) form a helical membrane-spanning segment. Residues 249-263 (QNGEWQAGLWPLRTS) are Cytoplasmic-facing.

It belongs to the MHC class I family. As to quaternary structure, binds to KLRK1/NKG2D. (Microbial infection) Contrary to other family members, does not interact with CMV glycoprotein UL16. Predominantly expressed in the skin, but also expressed in testis and trachea. Up-regulated in tumor cells of different origins. Expression progressively decreased after treatment of tumor cells with retinoic acid.

Its subcellular location is the membrane. It localises to the secreted. Binds and activates the KLRK1/NKG2D receptor, mediating natural killer cell cytotoxicity. The sequence is that of Retinoic acid early transcript 1E from Homo sapiens (Human).